Reading from the N-terminus, the 404-residue chain is Ubiquitin-like modifier-activating enzyme 5 (404 aa).

ATP contacts are provided by Gly-83, Asp-104, Lys-127, Asn-150, and Asn-184. Zn(2+)-binding residues include Cys-226 and Cys-229. Residue Cys-250 is the Glycyl thioester intermediate of the active site. Residues Cys-303 and Cys-308 each contribute to the Zn(2+) site. The tract at residues 372–404 is disordered; that stretch reads APEKSSETSEETVSAATADETSLEDLMAQMKSM. Low complexity predominate over residues 382–391; it reads ETVSAATADE.

The protein belongs to the ubiquitin-activating E1 family. UBA5 subfamily. In terms of assembly, interacts (via C-terminus) with Ufc1. Interacts with Ufm1.

Its subcellular location is the cytoplasm. The protein localises to the nucleus. The protein resides in the golgi apparatus. Its function is as follows. E1-like enzyme which activates UFM1. In Drosophila melanogaster (Fruit fly), this protein is Ubiquitin-like modifier-activating enzyme 5.